We begin with the raw amino-acid sequence, 246 residues long: tRNA pseudouridine synthase A (246 aa).

The Nucleophile role is filled by Asp-54. Tyr-112 contacts substrate.

It belongs to the tRNA pseudouridine synthase TruA family. As to quaternary structure, homodimer.

It carries out the reaction uridine(38/39/40) in tRNA = pseudouridine(38/39/40) in tRNA. In terms of biological role, formation of pseudouridine at positions 38, 39 and 40 in the anticodon stem and loop of transfer RNAs. This is tRNA pseudouridine synthase A from Moorella thermoacetica (strain ATCC 39073 / JCM 9320).